Consider the following 602-residue polypeptide: Myotubularin (602 aa).

Residues M1–N16 are compositionally biased toward polar residues. The disordered stretch occupies residues M1–E33. The span at S17–E33 shows a compositional bias: basic and acidic residues. Positions H28–G96 constitute a GRAM domain. The 376-residue stretch at G162–Y537 folds into the Myotubularin phosphatase domain. Residues N287, N312, and I313 each coordinate a 1,2-diacyl-sn-glycero-3-phospho-(1D-myo-inositol-3,5-bisphosphate). The a 1,2-diacyl-sn-glycero-3-phospho-(1D-myo-inositol-3-phosphate) site is built by N287, N312, and I313. Residue C374 is the Phosphocysteine intermediate of the active site. A 1,2-diacyl-sn-glycero-3-phospho-(1D-myo-inositol-3,5-bisphosphate) is bound by residues S375, D376, G377, W378, D379, R380, K416, and R420. A 1,2-diacyl-sn-glycero-3-phospho-(1D-myo-inositol-3-phosphate) is bound by residues S375, D376, G377, W378, D379, and R380. R420 lines the a 1,2-diacyl-sn-glycero-3-phospho-(1D-myo-inositol-3-phosphate) pocket. Positions N577–F602 are disordered. Positions S584–F602 are enriched in low complexity.

The protein belongs to the protein-tyrosine phosphatase family. Non-receptor class myotubularin subfamily.

The protein resides in the cytoplasm. Its subcellular location is the cell membrane. It localises to the cell projection. It is found in the filopodium. The protein localises to the ruffle. The protein resides in the late endosome. Its subcellular location is the myofibril. It localises to the sarcomere. It catalyses the reaction a 1,2-diacyl-sn-glycero-3-phospho-(1D-myo-inositol-3-phosphate) + H2O = a 1,2-diacyl-sn-glycero-3-phospho-(1D-myo-inositol) + phosphate. The catalysed reaction is a 1,2-diacyl-sn-glycero-3-phospho-(1D-myo-inositol-3,5-bisphosphate) + H2O = a 1,2-diacyl-sn-glycero-3-phospho-(1D-myo-inositol-5-phosphate) + phosphate. The enzyme catalyses 1,2-dioctanoyl-sn-glycero-3-phospho-(1-D-myo-inositol-3-phosphate) + H2O = 1,2-dioctanoyl-sn-glycero-3-phospho-(1D-myo-inositol) + phosphate. It carries out the reaction 1,2-dioctanoyl-sn-glycero-3-phospho-(1D-myo-inositol-3,5-bisphosphate) + H2O = 1,2-dioctanoyl-sn-glycero-3-phospho-(1D-myo-inositol-5-phosphate) + phosphate. It catalyses the reaction 1,2-dihexadecanoyl-sn-glycero-3-phospho-(1D-myo-inositol-3,5-phosphate) + H2O = 1,2-dihexadecanoyl-sn-glycero-3-phospho-(1D-myo-inositol-5-phosphate) + phosphate. Lipid phosphatase which dephosphorylates phosphatidylinositol 3-monophosphate (PI3P) and phosphatidylinositol 3,5-bisphosphate (PI(3,5)P2). This is Myotubularin (mtm1) from Xenopus laevis (African clawed frog).